Reading from the N-terminus, the 37-residue chain is Large ribosomal subunit protein bL36c (37 aa).

The protein belongs to the bacterial ribosomal protein bL36 family.

It is found in the plastid. The chain is Large ribosomal subunit protein bL36c from Cuscuta exaltata (Tall dodder).